A 102-amino-acid polypeptide reads, in one-letter code: MAGQKIRIRLKSYDHAGLDTSARKIVDTVTRAGATVVGPVPLPTEKNVVCVIRSPHKYKDSREHFEMRTHKRLIDIVDPTPKAVDSLMRLDLPADVNIEIKL.

Belongs to the universal ribosomal protein uS10 family. As to quaternary structure, part of the 30S ribosomal subunit.

Its function is as follows. Involved in the binding of tRNA to the ribosomes. This is Small ribosomal subunit protein uS10 from Leifsonia xyli subsp. xyli (strain CTCB07).